We begin with the raw amino-acid sequence, 205 residues long: Transcriptional regulatory protein PdtaR (205 aa).

Residues 15 to 129 (RVLIAEDEAL…DLIPAIELAV (115 aa)) enclose the Response regulatory domain. A 4-aspartylphosphate modification is found at D65. The 62-residue stretch at 135–196 (ITALEGEVAT…TMKRVAEVVL (62 aa)) folds into the ANTAR domain.

Post-translationally, phosphorylated and activated by PdtaS.

It is found in the cytoplasm. Its function is as follows. Member of the two-component regulatory system PdtaR/PdtaS. This two-component system plays an essential role in mycobacterial adaptation to poor nutrient conditions. PdtaR probably acts at the level of transcriptional antitermination rather than transcriptional initiation. In addition, the PdtaR/PdtaS two-component system controls copper and nitric oxide (NO) resistance downstream of the intramembrane protease Rip1. This coupled Rip1/PdtaS/PdtaR circuit controls NO resistance and acute lung infection in mice by relieving PdtaR/PdtaS-mediated repression of isonitrile chalkophore biosynthesis. Two signals are required to fully inactivate the PdtaR/PdtaS system and mediate NO resistance: a cytoplasmic inhibitory signal through the PdtaS kinase mediated by direct sensing of NO and the production of PPE1-5', an NO-induced small RNA, to sequester PdtaR. This Mycobacterium tuberculosis (strain CDC 1551 / Oshkosh) protein is Transcriptional regulatory protein PdtaR (pdtaR).